The chain runs to 543 residues: Cytochrome P450 monooxygenase CYP1 (543 aa).

The chain crosses the membrane as a helical span at residues 40-60 (SSFFTRILIAFIGLCLLSIFS). N-linked (GlcNAc...) asparagine glycans are attached at residues asparagine 210 and asparagine 367. Cysteine 478 contributes to the heme binding site. An N-linked (GlcNAc...) asparagine glycan is attached at asparagine 517.

This sequence belongs to the cytochrome P450 family. Requires heme as cofactor.

Its subcellular location is the membrane. Its pathway is secondary metabolite biosynthesis. Cytochrome P450 monooxygenase; part of the gene cluster that mediates the biosynthesis of a tyrosine-derived cytochalasan acting as a fungal signal recognized by resistant rice plants and leads to avirulence in Pi33 resistant rice cultivars. The first step in the pathway is catalyzed by the hybrid PKS-NRPS ACE1, assisted by the enoyl reductase RAP1, that are responsible for fusion of the tyrosine precursor and the polyketide backbone. The polyketide synthase module (PKS) of ACE1 is responsible for the synthesis of the polyketide backbone and the downstream nonribosomal peptide synthetase (NRPS) amidates the carboxyl end of the polyketide with the tyrosine precursor. Because ACE1 lacks a designated enoylreductase (ER) domain, the required activity is provided the enoyl reductase RAP1. Reduction by the hydrolyase ORFZ, followed by dehydration and intra-molecular Diels-Alder cyclization by the Diels-Alderase ORF3 then yield the required isoindolone-fused macrocycle. A number of oxidative steps catalyzed by the tailoring enzymes identified within the cluster, including cytochrome P450 monooxygenases CYP1 to CYP4, the FAD-linked oxidoreductase OXR2 and the short-chain dehydrogenase/reductase OXR1, are further required to afford the final cytochalasans that confer avirulence and which have still to be identified. The monooxygenase CYP1 has been shown to be a site-selective C-18 hydroxylase whereas the function of CYP3 is the site-selective epoxidation of the C-6/C-7 olefin that is present in some intermediate compounds. Finally, SYN2 and RAP2 are not required for avirulence in Pi33 resistant rice cultivars. The polypeptide is Cytochrome P450 monooxygenase CYP1 (Pyricularia oryzae (strain 70-15 / ATCC MYA-4617 / FGSC 8958) (Rice blast fungus)).